The following is a 156-amino-acid chain: MSRRHKAEKREINPDPKFGDLVITKFMNAVMLHGKKSVAESIVYGALDVIEAKAKSEPVALFHQALDNVAPHIEVRSRRVGGATYQVPVDVRPERRQALAIRWLINAARGRNETTMIDRLSGELLDAANNRGSAVKKREDTHRMAEANRAFSHYRW.

Belongs to the universal ribosomal protein uS7 family. In terms of assembly, part of the 30S ribosomal subunit. Contacts proteins S9 and S11.

In terms of biological role, one of the primary rRNA binding proteins, it binds directly to 16S rRNA where it nucleates assembly of the head domain of the 30S subunit. Is located at the subunit interface close to the decoding center, probably blocks exit of the E-site tRNA. The protein is Small ribosomal subunit protein uS7 of Brucella anthropi (strain ATCC 49188 / DSM 6882 / CCUG 24695 / JCM 21032 / LMG 3331 / NBRC 15819 / NCTC 12168 / Alc 37) (Ochrobactrum anthropi).